Here is a 150-residue protein sequence, read N- to C-terminus: D-aminoacyl-tRNA deacylase (150 aa).

The Gly-cisPro motif, important for rejection of L-amino acids motif lies at 138-139; that stretch reads GP.

This sequence belongs to the DTD family. As to quaternary structure, homodimer.

It is found in the cytoplasm. It carries out the reaction glycyl-tRNA(Ala) + H2O = tRNA(Ala) + glycine + H(+). It catalyses the reaction a D-aminoacyl-tRNA + H2O = a tRNA + a D-alpha-amino acid + H(+). Functionally, an aminoacyl-tRNA editing enzyme that deacylates mischarged D-aminoacyl-tRNAs. Also deacylates mischarged glycyl-tRNA(Ala), protecting cells against glycine mischarging by AlaRS. Acts via tRNA-based rather than protein-based catalysis; rejects L-amino acids rather than detecting D-amino acids in the active site. By recycling D-aminoacyl-tRNA to D-amino acids and free tRNA molecules, this enzyme counteracts the toxicity associated with the formation of D-aminoacyl-tRNA entities in vivo and helps enforce protein L-homochirality. The protein is D-aminoacyl-tRNA deacylase of Bacteroides fragilis (strain ATCC 25285 / DSM 2151 / CCUG 4856 / JCM 11019 / LMG 10263 / NCTC 9343 / Onslow / VPI 2553 / EN-2).